Reading from the N-terminus, the 492-residue chain is Histone-lysine N-methyltransferase PRDM7 (492 aa).

A disordered region spans residues Met1 to Pro22. The region spanning Met23–Asp86 is the KRAB-related domain. The tract at residues Glu111–Lys179 is disordered. Residues Gly135–Lys150 show a composition bias toward polar residues. Over residues Leu167–Lys179 the composition is skewed to basic and acidic residues. The region spanning Pro244–Gly358 is the SET domain.

Its subcellular location is the nucleus. The protein localises to the chromosome. It carries out the reaction N(6),N(6)-dimethyl-L-lysyl(4)-[histone H3] + S-adenosyl-L-methionine = N(6),N(6),N(6)-trimethyl-L-lysyl(4)-[histone H3] + S-adenosyl-L-homocysteine + H(+). In terms of biological role, histone methyltransferase that selectively methylates 'Lys-4' of dimethylated histone H3 (H3K4me2) to produce trimethylated 'Lys-4' histone H3 (H3K4me3). May play a role in epigenetic regulation of gene expression by defining an active chromatin state. In Homo sapiens (Human), this protein is Histone-lysine N-methyltransferase PRDM7.